We begin with the raw amino-acid sequence, 734 residues long: MENKKTKLTLSGIAKKSIENIELAKTQSKNSVVIEKKPSKFAPRSSFTRPASVRSKPAVSTTSSFPPRTASVPKPASPITNDYEKRKLAEQRATRRLKGDTGKPETKKRELKLTVSRALSDEIEARSRSMASLKRAKLKENRELTKEEIQESLKPVKRDVNIPEAITVRELSNRMAEQSSNVIKHLFGMGVTVTINQTLAADTAEYLVKEFGHNPIRETKAEEIIQKIKESRSENLKNRPPIVTVMGHVDHGKTSVLDVLRSANVVSGEFGGITQHIGAYQIQHESNKLTFIDTPGHAAFTEMRARGSKLTDVVVLVVAADDGVKPQTIESIKHAKAANVPIVVAINKCDLPEADPQKIKNQLLEYELIAEDLSGDTLMVEISAKNKKNLDKLVESIVLQAEILDLKTDFESKATGIVLESKIDIGRGAVATVVVTSGTIKKGDFFVSGLKWGKVRALINDKGENVNEAPPSMPVEILGINGAAKSGDDFIVLDSEKEAKTLSQNRAEESKTGGSPLTFATQDSAFADKSAAELNIIVKSDVHGSAEAIKSAINQITHDEVKPKIILSDIGMVTETDVTLAKASNAALIAFNVKPSKEAKKLAENEKIVISSYNIIYEVLDYIKLRMSGLLAPDVQEKIIGTAQILEIFKVSGTGKVAGSKVTEGEITSGASARVVRDGAIIYTGKISTIFREKDQAKQVSNGQECGITLKDFIDFQKNDTIEAFSTTTTDRTV.

Residues 39-110 (SKFAPRSSFT…TGKPETKKRE (72 aa)) form a disordered region. Positions 82–110 (DYEKRKLAEQRATRRLKGDTGKPETKKRE) are enriched in basic and acidic residues. One can recognise a tr-type G domain in the interval 238–405 (NRPPIVTVMG…SIVLQAEILD (168 aa)). Positions 247-254 (GHVDHGKT) are G1. 247-254 (GHVDHGKT) contacts GTP. Positions 272–276 (GITQH) are G2. Residues 293 to 296 (DTPG) form a G3 region. Residues 293–297 (DTPGH) and 347–350 (NKCD) each bind GTP. Positions 347-350 (NKCD) are G4. The tract at residues 383–385 (SAK) is G5.

The protein belongs to the TRAFAC class translation factor GTPase superfamily. Classic translation factor GTPase family. IF-2 subfamily.

It is found in the cytoplasm. Functionally, one of the essential components for the initiation of protein synthesis. Protects formylmethionyl-tRNA from spontaneous hydrolysis and promotes its binding to the 30S ribosomal subunits. Also involved in the hydrolysis of GTP during the formation of the 70S ribosomal complex. This chain is Translation initiation factor IF-2, found in Pelagibacter ubique (strain HTCC1062).